The chain runs to 663 residues: UvrABC system protein B (663 aa).

Residues 26–414 (DGLESGLAKQ…DNVAEQVVRP (389 aa)) form the Helicase ATP-binding domain. Residue 39 to 46 (GVTGSGKT) coordinates ATP. Residues 92-115 (YYDYYQPEAYVPASDTFIEKDASI) carry the Beta-hairpin motif. The region spanning 430–596 (QVDDLMSEIR…GINKSVEDIL (167 aa)) is the Helicase C-terminal domain. A UVR domain is found at 624 to 659 (VKQINALEKQMYSHAQNMEFELAAKIRDEYLLLKEQ).

It belongs to the UvrB family. As to quaternary structure, forms a heterotetramer with UvrA during the search for lesions. Interacts with UvrC in an incision complex.

It is found in the cytoplasm. Its function is as follows. The UvrABC repair system catalyzes the recognition and processing of DNA lesions. A damage recognition complex composed of 2 UvrA and 2 UvrB subunits scans DNA for abnormalities. Upon binding of the UvrA(2)B(2) complex to a putative damaged site, the DNA wraps around one UvrB monomer. DNA wrap is dependent on ATP binding by UvrB and probably causes local melting of the DNA helix, facilitating insertion of UvrB beta-hairpin between the DNA strands. Then UvrB probes one DNA strand for the presence of a lesion. If a lesion is found the UvrA subunits dissociate and the UvrB-DNA preincision complex is formed. This complex is subsequently bound by UvrC and the second UvrB is released. If no lesion is found, the DNA wraps around the other UvrB subunit that will check the other stand for damage. This Legionella pneumophila subsp. pneumophila (strain Philadelphia 1 / ATCC 33152 / DSM 7513) protein is UvrABC system protein B.